A 130-amino-acid polypeptide reads, in one-letter code: uncharacterized protein (130 aa).

This is an uncharacterized protein from Pasteurella multocida (strain Pm70).